Here is a 208-residue protein sequence, read N- to C-terminus: MAQTELNVSQREGLGKGTARSLRREGLIPAVMYGKGVENCSLVVEPKQLAAIIGSEAGLNSLITLKGEGAFDGKVVILKDMQVDPIRQTPLHVDFQAIDLNAKTHVLVPLVVVGKSEGEKQGGNLQIIRHEVELVCLPANIPANIEVDVTALNIGDALHVQDVQLPEGVEIPQDVNFTVVTVTGRTAEVEEEGAEVVEEGEEAAEAGE.

Belongs to the bacterial ribosomal protein bL25 family. CTC subfamily. In terms of assembly, part of the 50S ribosomal subunit; part of the 5S rRNA/L5/L18/L25 subcomplex. Contacts the 5S rRNA. Binds to the 5S rRNA independently of L5 and L18.

Functionally, this is one of the proteins that binds to the 5S RNA in the ribosome where it forms part of the central protuberance. This chain is Large ribosomal subunit protein bL25, found in Syntrophotalea carbinolica (strain DSM 2380 / NBRC 103641 / GraBd1) (Pelobacter carbinolicus).